The following is a 401-amino-acid chain: Renin-2 (401 aa).

Positions 1–25 (MDRRRMPLWALLLLWSPCTFSLPTG) are cleaved as a signal peptide. Positions 26 to 63 (TTFERIPLKKMPSVREILEERGVDMTRLSAEWDVFTKR) are cleaved as a propeptide — activation peptide. The region spanning 83 to 398 (YYGEIGIGTP…DRHNNRIGFA (316 aa)) is the Peptidase A1 domain. D101 is a catalytic residue. Intrachain disulfides connect C114-C121 and C277-C281. Residue D286 is part of the active site. Residues C320 and C357 are joined by a disulfide bond.

This sequence belongs to the peptidase A1 family. In terms of assembly, dimer of a heavy chain and a light chain joined by a disulfide bond. In terms of tissue distribution, submandibular gland.

It localises to the secreted. It carries out the reaction Cleavage of Leu-|-Xaa bond in angiotensinogen to generate angiotensin I.. Functionally, renin is a highly specific endopeptidase, related to pepsin, whose only known function is to generate angiotensin I from angiotensinogen in the plasma, initiating a cascade of reactions that produce an elevation of blood pressure and increased sodium retention by the kidney. The sequence is that of Renin-2 from Mus musculus (Mouse).